Reading from the N-terminus, the 325-residue chain is L-lactate dehydrogenase (325 aa).

NAD(+) contacts are provided by residues Val21, Asp42, Lys47, Tyr73, and 87–88; that span reads GA. Substrate-binding positions include Gln90, Arg96, and 128–131; that span reads NPVD. NAD(+) is bound by residues 126–128 and Ser151; that span reads ATN. 156–159 serves as a coordination point for substrate; that stretch reads DTAR. The beta-D-fructose 1,6-bisphosphate site is built by Arg161 and His176. Residue His183 is the Proton acceptor of the active site. Position 228 is a phosphotyrosine (Tyr228). Thr237 contributes to the substrate binding site.

The protein belongs to the LDH/MDH superfamily. LDH family. In terms of assembly, homotetramer.

The protein localises to the cytoplasm. The enzyme catalyses (S)-lactate + NAD(+) = pyruvate + NADH + H(+). The protein operates within fermentation; pyruvate fermentation to lactate; (S)-lactate from pyruvate: step 1/1. Allosterically activated by fructose 1,6-bisphosphate (FBP). Its function is as follows. Catalyzes the conversion of lactate to pyruvate. The polypeptide is L-lactate dehydrogenase (Shouchella clausii (strain KSM-K16) (Alkalihalobacillus clausii)).